A 772-amino-acid chain; its full sequence is MTEQAQREAELKRRKVRKGTHSCWECRRRKIRCQFGAGNDTVCLPCQARGSTCRSQEYVDKDARPSQQPDRRMAQRLGRLEELMARLVDRILPEAGGQLANRSTTQSNRGSRSPSPDSAQNEGLAFHQTLDVLEASLGPNTPAGLLLGLRDAAQPASMLTPESDHSPAPSKLTPSRNSKTSRSLYALFPPQEALPVLMKANAGPYYLTSLFSSFRDLIEGKVETANSVTVIPPAVSHPTVLARRLLQICICMQQLNPGYDTSPLQIKGTIPEYMNNVVTTVTNLVTSIDEIVSTGEGLESLVLLGLWHANAGNLRKAWLTYRRALSLGQLMGIDRGSTRALKFVDTNTDPQKHSTPAGLWYRINACDRASSLLLGLPAGDLDNSFATEEAMKRDTAMERLEKIHVVLTGRIIERNATRSSSEAYAVTQSIDSELERAATSMGADWWSEPDFDVTDETGHKLGEMLRQMLQMRHFDLLILLHLPYMLRDPSENRYDYSKTTCARSSREVLKRFIPFRSKVTAAWACRHVDYSALVASMTLLVGYLRQHQHATEPAPTCKERNEDRKLIEVVRERMQHVAITNRDKVTQESADILGQMMPILDLIDRSLMGDLSECNSHVLKCLHLKVPYLGTINFHPNVNVPEGQSANTPYSRRDNAGTIPGPVSVAGAATSGLEQLQPRMAGLSTAHDAAMPSVTAMSQGGDSMQVDMATFDPALLPPDTSIDGMYMDFDEQPQDGVHEIPDLMAGVEDWVLQGLDTTYWSLLNGNNMAWGG.

The segment at residues 23 to 53 is a DNA-binding region (zn(2)-C6 fungal-type); the sequence is CWECRRRKIRCQFGAGNDTVCLPCQARGSTC. 2 disordered regions span residues 94–121 and 156–180; these read EAGGQLANRSTTQSNRGSRSPSPDSAQN and ASMLTPESDHSPAPSKLTPSRNSKT. Over residues 100 to 121 the composition is skewed to polar residues; it reads ANRSTTQSNRGSRSPSPDSAQN.

It localises to the nucleus. The protein operates within antibiotic biosynthesis. Its function is as follows. Transcription factor; part of the gene cluster that mediates the biosynthesis of sordarin and hypoxysordarin, glycoside antibiotics with a unique tetracyclic diterpene aglycone structure. First, the geranylgeranyl diphosphate synthase sdnC constructs GGDP from farnesyl diphosphate and isopentenyl diphosphate. The diterpene cyclase sdnA then catalyzes the cyclization of GGDP to afford cycloaraneosene. Cycloaraneosene is then hydroxylated four times by the putative cytochrome P450 monooxygenases sdnB, sdnE, sdnF and sdnH to give a hydroxylated cycloaraneosene derivative such as cycloaraneosene-8,9,13,19-tetraol. Although the order of the hydroxylations is unclear, at least C8, C9 and C13 of the cycloaraneosene skeleton are hydroxylated before the sordaricin formation. Dehydration of the 13-hydroxy group of the hydroxylated cycloaraneosene derivative might be catalyzed by an unassigned hypothetical protein such as sdnG and sdnP to construct the cyclopentadiene moiety. The FAD-dependent oxidoreductase sdnN is proposed to catalyze the oxidation at C9 of the hydroxylated cycloaraneosene derivative and also catalyze the Baeyer-Villiger oxidation to give the lactone intermediate. The presumed lactone intermediate would be hydrolyzed to give an acrolein moiety and a carboxylate moiety. Then, [4+2]cycloaddition would occur between the acrolein moiety and the cyclopentadiene moiety to give sordaricin. SdnN might also be involved in the [4+2]cycloaddition after the hypothesized oxidation to accommodate the oxidized product and prompt the [4+2]cycloaddition. GDP-6-deoxy-D-altrose may be biosynthesized from GDP-D-mannose by the putative GDP-mannose-4,6-dehydratase sdnI and the short-chain dehydrogenase sdnK. The glycosyltransferase sdnJ catalyzes the attachment of 6-deoxy-D-altrose onto the 19-hydroxy group of sordaricin to give 4'-O-demethylsordarin. The methyltransferase sdnD would complete the biosynthesis of sordarin. Sordarin can be further modified into hypoxysordarin. The unique acyl chain at the 3'-hydroxy group of hypoxysordarin would be constructed by an iterative type I PKS sdnO and the trans-acting polyketide methyltransferase sdnL. SdnL would be responsible for the introduction of an alpha-methyl group of the polyketide chain. Alternatively, the beta-lactamase-like protein sdnR might be responsible for the cleavage and transfer of the polyketide chain from the PKS sdnO to sordarin. Two putative cytochrome P450 monooxygenases, sdnQ and sdnT, might catalyze the epoxidations of the polyketide chain to complete the biosynthesis of hypoxysordarin. Transcriptional regulators sdnM and sdnS are presumably encoded for the transcriptional regulation of the expression of the sdn gene cluster. The protein is Transcription factor sdnS of Sordaria araneosa (Pleurage araneosa).